Reading from the N-terminus, the 352-residue chain is Ion-translocating oxidoreductase complex subunit D (352 aa).

4 helical membrane-spanning segments follow: residues isoleucine 20–glycine 40, glycine 42–leucine 62, isoleucine 89–alanine 109, and proline 123–leucine 143. Threonine 187 carries the post-translational modification FMN phosphoryl threonine. 5 helical membrane passes run isoleucine 214–leucine 234, tryptophan 242–phenylalanine 262, leucine 267–leucine 287, leucine 301–proline 321, and aspartate 322–threonine 342.

This sequence belongs to the NqrB/RnfD family. As to quaternary structure, the complex is composed of six subunits: RsxA, RsxB, RsxC, RsxD, RsxE and RsxG. FMN serves as cofactor.

The protein localises to the cell inner membrane. Its function is as follows. Part of a membrane-bound complex that couples electron transfer with translocation of ions across the membrane. Required to maintain the reduced state of SoxR. The protein is Ion-translocating oxidoreductase complex subunit D of Escherichia coli (strain UTI89 / UPEC).